A 335-amino-acid chain; its full sequence is Methionine aminopeptidase 1D, mitochondrial (335 aa).

The transit peptide at 1-19 directs the protein to the mitochondrion; sequence MAAPSGVHLLVRRGSHRIF. H161 is a substrate binding site. 3 residues coordinate a divalent metal cation: D178, D189, and H252. A substrate-binding site is contributed by H259. Positions 284 and 315 each coordinate a divalent metal cation.

It belongs to the peptidase M24A family. Methionine aminopeptidase type 1 subfamily. It depends on Co(2+) as a cofactor. Zn(2+) serves as cofactor. Mn(2+) is required as a cofactor. The cofactor is Fe(2+). In terms of tissue distribution, overexpressed in colon cancer cell lines and colon tumors as compared to normal tissues (at protein level).

Its subcellular location is the mitochondrion. The catalysed reaction is Release of N-terminal amino acids, preferentially methionine, from peptides and arylamides.. Its function is as follows. Removes the N-terminal methionine from nascent proteins. The N-terminal methionine is often cleaved when the second residue in the primary sequence is small and uncharged (Met-Ala-, Cys, Gly, Pro, Ser, Thr, or Val). Requires deformylation of the N(alpha)-formylated initiator methionine before it can be hydrolyzed. May play a role in colon tumorigenesis. The sequence is that of Methionine aminopeptidase 1D, mitochondrial (METAP1D) from Homo sapiens (Human).